Consider the following 448-residue polypeptide: C4-dicarboxylate transport protein (448 aa).

7 helical membrane passes run 22 to 42, 55 to 75, 90 to 110, 137 to 157, 159 to 179, 199 to 219, and 232 to 252; these read FQVV…PAFA, LVKM…IAGM, TYFL…AHVV, ELSL…SAFV, GNIL…ALVG, LVHM…AFTI, and WLVG…LGIV. The tract at residues 428–448 is disordered; it reads RAPPLQAPVPPPDAVAPVSAR. A compositionally biased stretch (pro residues) spans 432-441; it reads LQAPVPPPDA.

Belongs to the dicarboxylate/amino acid:cation symporter (DAACS) (TC 2.A.23) family.

It is found in the cell inner membrane. In terms of biological role, responsible for the transport of dicarboxylates such as succinate, fumarate, and malate from the periplasm across the membrane. The polypeptide is C4-dicarboxylate transport protein (Xanthomonas campestris pv. campestris (strain 8004)).